The chain runs to 621 residues: 1-deoxy-D-xylulose-5-phosphate synthase (621 aa).

Thiamine diphosphate-binding positions include His-80 and 121-123; that span reads GHS. Mg(2+) is bound at residue Asp-152. Thiamine diphosphate contacts are provided by residues 153–154, Asn-181, Tyr-288, and Glu-370; that span reads GA. Asn-181 is a Mg(2+) binding site.

It belongs to the transketolase family. DXPS subfamily. In terms of assembly, homodimer. Mg(2+) serves as cofactor. Thiamine diphosphate is required as a cofactor.

The catalysed reaction is D-glyceraldehyde 3-phosphate + pyruvate + H(+) = 1-deoxy-D-xylulose 5-phosphate + CO2. The protein operates within metabolic intermediate biosynthesis; 1-deoxy-D-xylulose 5-phosphate biosynthesis; 1-deoxy-D-xylulose 5-phosphate from D-glyceraldehyde 3-phosphate and pyruvate: step 1/1. Catalyzes the acyloin condensation reaction between C atoms 2 and 3 of pyruvate and glyceraldehyde 3-phosphate to yield 1-deoxy-D-xylulose-5-phosphate (DXP). This is 1-deoxy-D-xylulose-5-phosphate synthase from Shewanella sediminis (strain HAW-EB3).